A 186-amino-acid polypeptide reads, in one-letter code: Elongation factor P (186 aa).

The protein belongs to the elongation factor P family.

The protein localises to the cytoplasm. It participates in protein biosynthesis; polypeptide chain elongation. Functionally, involved in peptide bond synthesis. Stimulates efficient translation and peptide-bond synthesis on native or reconstituted 70S ribosomes in vitro. Probably functions indirectly by altering the affinity of the ribosome for aminoacyl-tRNA, thus increasing their reactivity as acceptors for peptidyl transferase. The sequence is that of Elongation factor P from Streptococcus thermophilus (strain CNRZ 1066).